The chain runs to 471 residues: Glutamate--tRNA ligase (471 aa).

Residues 9–19 (PSPTGYLHVGG) carry the 'HIGH' region motif. Residues cysteine 98, cysteine 100, cysteine 125, and aspartate 127 each coordinate Zn(2+). Positions 237–241 (KLSKR) match the 'KMSKS' region motif. An ATP-binding site is contributed by lysine 240.

The protein belongs to the class-I aminoacyl-tRNA synthetase family. Glutamate--tRNA ligase type 1 subfamily. In terms of assembly, monomer. Requires Zn(2+) as cofactor.

It localises to the cytoplasm. It catalyses the reaction tRNA(Glu) + L-glutamate + ATP = L-glutamyl-tRNA(Glu) + AMP + diphosphate. In terms of biological role, catalyzes the attachment of glutamate to tRNA(Glu) in a two-step reaction: glutamate is first activated by ATP to form Glu-AMP and then transferred to the acceptor end of tRNA(Glu). In Yersinia pseudotuberculosis serotype IB (strain PB1/+), this protein is Glutamate--tRNA ligase.